The following is a 253-amino-acid chain: Small ribosomal subunit protein uS2 (253 aa).

It belongs to the universal ribosomal protein uS2 family.

This is Small ribosomal subunit protein uS2 from Cereibacter sphaeroides (strain ATCC 17023 / DSM 158 / JCM 6121 / CCUG 31486 / LMG 2827 / NBRC 12203 / NCIMB 8253 / ATH 2.4.1.) (Rhodobacter sphaeroides).